A 433-amino-acid polypeptide reads, in one-letter code: Tol-Pal system protein TolB (433 aa).

A signal peptide spans 1–26 (MNKLRLFRSFFAFLLPFGMATGAAHG).

It belongs to the TolB family. As to quaternary structure, the Tol-Pal system is composed of five core proteins: the inner membrane proteins TolA, TolQ and TolR, the periplasmic protein TolB and the outer membrane protein Pal. They form a network linking the inner and outer membranes and the peptidoglycan layer.

The protein resides in the periplasm. Functionally, part of the Tol-Pal system, which plays a role in outer membrane invagination during cell division and is important for maintaining outer membrane integrity. This Methylobacillus flagellatus (strain ATCC 51484 / DSM 6875 / VKM B-1610 / KT) protein is Tol-Pal system protein TolB.